Reading from the N-terminus, the 223-residue chain is Killer cell lectin-like receptor subfamily B member 1B allele C (223 aa).

The Cytoplasmic portion of the chain corresponds to 1–45 (MDTAVVYADLHLARTGEPKRESPPSLSPDTCQCPRWHRLALKLGC). The short motif at 5–10 (VVYADL) is the ITIM motif element. Residues 31-34 (CQCP) carry the LCK-binding motif motif. The helical; Signal-anchor for type II membrane protein transmembrane segment at 46-66 (ACFILLVLSVIGLGVLVLTLL) threads the bilayer. Topologically, residues 67 to 223 (QKPLLQNSPA…LKRESTCNDS (157 aa)) are extracellular. Residues 101-211 (HRDKCFHVSQ…CDSDNIWICQ (111 aa)) form the C-type lectin domain. Disulfide bonds link C122-C210 and C189-C202.

As to quaternary structure, homodimer; disulfide-linked. Interacts with tyrosine kinase LCK. Binds PTPN6/SHP-1 in a phosphorylation-dependent manner. Expressed in a subset of natural killer cells.

It localises to the membrane. In terms of biological role, receptor for CLEC2D/OCIL. Ligand-binding contributes to inhibition of cytotoxic natural killer (NK) cells. May mediate MHC class I-independent 'missing-self' recognition of allografts, tumor cells and virus-infected cells. The polypeptide is Killer cell lectin-like receptor subfamily B member 1B allele C (Rattus norvegicus (Rat)).